The following is a 225-amino-acid chain: MANINFGFEHHASKLYSGAIEQGIQNSLVPMVIETSGRGERAFDIFSRLLRERIIFLGSGIDEHVAGLIMAQLIFLESEDPERDIYIYVNSPGGSVSAGLGIYDTMQYIRPDVSTVCVGMAASMGAFLLASGAKGKRASLPHSRIMIHQPSGGAQGQESDIIIQAREIEKIRRLLEEILASHTGKDVQQVREDSERDRWMNAEEALDYGIIDQVFAKRPAPEKKD.

The Nucleophile role is filled by S123. H148 is a catalytic residue.

The protein belongs to the peptidase S14 family. In terms of assembly, fourteen ClpP subunits assemble into 2 heptameric rings which stack back to back to give a disk-like structure with a central cavity, resembling the structure of eukaryotic proteasomes.

The protein resides in the cytoplasm. It carries out the reaction Hydrolysis of proteins to small peptides in the presence of ATP and magnesium. alpha-casein is the usual test substrate. In the absence of ATP, only oligopeptides shorter than five residues are hydrolyzed (such as succinyl-Leu-Tyr-|-NHMec, and Leu-Tyr-Leu-|-Tyr-Trp, in which cleavage of the -Tyr-|-Leu- and -Tyr-|-Trp bonds also occurs).. Functionally, cleaves peptides in various proteins in a process that requires ATP hydrolysis. Has a chymotrypsin-like activity. Plays a major role in the degradation of misfolded proteins. The sequence is that of ATP-dependent Clp protease proteolytic subunit from Chlorobium luteolum (strain DSM 273 / BCRC 81028 / 2530) (Pelodictyon luteolum).